The primary structure comprises 254 residues: H-2 class II histocompatibility antigen, I-E alpha chain (254 aa).

Residues R1 to D24 form the signal peptide. The tract at residues I25–N109 is alpha-1. Topologically, residues I25–E216 are extracellular. 2 N-linked (GlcNAc...) asparagine glycosylation sites follow: N103 and N143. The alpha-2 stretch occupies residues E110–W203. One can recognise an Ig-like C1-type domain in the interval P112–E204. C132 and C188 form a disulfide bridge. The segment at E204 to E216 is connecting peptide. The helical transmembrane segment at T217–L242 threads the bilayer. The Cytoplasmic segment spans residues R243 to L254.

Belongs to the MHC class II family.

It localises to the membrane. This is H-2 class II histocompatibility antigen, I-E alpha chain from Mus musculus (Mouse).